The chain runs to 197 residues: MNILIIFASYLLGSLPTGFLIGKYLKNIDLRTIGSGSTGATNVLRNVGKWPALFVFIIDLGKGLIAVKIAQYYTDQGLIEVIAGISAISGHIWPIWLRGKGGKAVATGLGMFLALSWKVGLASLGFFLIVLTKTKYVSLSSISAAILLPIFMFFYLGKFMHSYFFISLIVALLVIWKHRTNITRLLKGEESKINQTQ.

Helical transmembrane passes span 1-21 (MNILIIFASYLLGSLPTGFLI), 50-70 (WPALFVFIIDLGKGLIAVKIA), 77-97 (GLIEVIAGISAISGHIWPIWL), 111-131 (MFLALSWKVGLASLGFFLIVL), 137-157 (VSLSSISAAILLPIFMFFYLG), and 158-178 (KFMHSYFFISLIVALLVIWKH).

This sequence belongs to the PlsY family. Probably interacts with PlsX.

It localises to the cell inner membrane. It catalyses the reaction an acyl phosphate + sn-glycerol 3-phosphate = a 1-acyl-sn-glycero-3-phosphate + phosphate. It functions in the pathway lipid metabolism; phospholipid metabolism. In terms of biological role, catalyzes the transfer of an acyl group from acyl-phosphate (acyl-PO(4)) to glycerol-3-phosphate (G3P) to form lysophosphatidic acid (LPA). This enzyme utilizes acyl-phosphate as fatty acyl donor, but not acyl-CoA or acyl-ACP. The sequence is that of Glycerol-3-phosphate acyltransferase from Prochlorococcus marinus (strain MIT 9301).